We begin with the raw amino-acid sequence, 208 residues long: 28 kDa heat- and acid-stable phosphoprotein homolog (208 aa).

2 disordered regions span residues Met-1–Lys-133 and Leu-145–Ala-208. Positions Phe-16 to Glu-44 are enriched in basic and acidic residues. 2 stretches are compositionally biased toward low complexity: residues Gly-52–Lys-69 and Arg-84–Lys-100. Positions Ser-105–Ile-121 are enriched in acidic residues. Positions Ile-137–Gly-206 form a coiled coil. 2 stretches are compositionally biased toward basic and acidic residues: residues Leu-145–Ala-154 and Gln-162–Ala-208.

Belongs to the PDAP1 family.

In Dictyostelium discoideum (Social amoeba), this protein is 28 kDa heat- and acid-stable phosphoprotein homolog.